Here is a 317-residue protein sequence, read N- to C-terminus: Melanocyte-stimulating hormone receptor (317 aa).

Residues 1-37 (MRVQGSQRRLLGSLNSTPTATPHLGLAANQTGARCLE) are Extracellular-facing. An N-linked (GlcNAc...) asparagine glycan is attached at N29. A helical membrane pass occupies residues 38-63 (VSIPDGLFLSLGLVSLVENVLVVTAI). The Cytoplasmic portion of the chain corresponds to 64-72 (AKNRNLHSP). Residues 73–93 (MYCFICCLALSDLLVSGSNML) traverse the membrane as a helical segment. At 94 to 118 (ETAVTLLLEAGALAARAAVVQQLDN) the chain is on the extracellular side. The chain crosses the membrane as a helical span at residues 119 to 140 (VIDVITCSSMLSSLCFLGAIAV). The Cytoplasmic segment spans residues 141 to 163 (DRYISIFYALRYHSIVTLPRARR). Residues 164–183 (AIAAIWVASVLCSTLFIAYY) traverse the membrane as a helical segment. Residues 184-191 (DHAAVLLC) lie on the Extracellular side of the membrane. The helical transmembrane segment at 192–211 (LVVFFLAMLVLMAVLYVHML) threads the bilayer. Topologically, residues 212–240 (ARACQHAQGIARLHKRQRLAHQGFGLKGA) are cytoplasmic. Residues 241 to 266 (ATLTILLGIFFLCWGPFFLHLTLIVL) traverse the membrane as a helical segment. Over 267–279 (CPQHPTCSCIFKN) the chain is Extracellular. Residues 280 to 300 (FNLFLALIICNAIIDPLIYAF) traverse the membrane as a helical segment. The Cytoplasmic portion of the chain corresponds to 301–317 (RSQELRRTLKEVLLCSW). C315 is lipidated: S-palmitoyl cysteine.

It belongs to the G-protein coupled receptor 1 family. As to quaternary structure, interacts with MGRN1, but does not undergo MGRN1-mediated ubiquitination; this interaction competes with GNAS-binding and thus inhibits agonist-induced cAMP production. Interacts with OPN3; the interaction results in a decrease in MC1R-mediated cAMP signaling and ultimately a decrease in melanin production in melanocytes.

It localises to the cell membrane. Functionally, receptor for MSH (alpha, beta and gamma) and ACTH. The activity of this receptor is mediated by G proteins which activate adenylate cyclase. Mediates melanogenesis, the production of eumelanin (black/brown) and phaeomelanin (red/yellow), via regulation of cAMP signaling in melanocytes. The protein is Melanocyte-stimulating hormone receptor (MC1R) of Macaca nigra (Celebes black macaque).